Consider the following 290-residue polypeptide: Diaminopimelate epimerase (290 aa).

Positions 17, 49, and 69 each coordinate substrate. Cys78 serves as the catalytic Proton donor. Substrate-binding positions include 79–80, Asn166, Asn199, and 217–218; these read GN and ER. The Proton acceptor role is filled by Cys226. 227 to 228 is a binding site for substrate; it reads GS.

It belongs to the diaminopimelate epimerase family. In terms of assembly, homodimer.

The protein resides in the cytoplasm. The catalysed reaction is (2S,6S)-2,6-diaminopimelate = meso-2,6-diaminopimelate. It functions in the pathway amino-acid biosynthesis; L-lysine biosynthesis via DAP pathway; DL-2,6-diaminopimelate from LL-2,6-diaminopimelate: step 1/1. Catalyzes the stereoinversion of LL-2,6-diaminopimelate (L,L-DAP) to meso-diaminopimelate (meso-DAP), a precursor of L-lysine and an essential component of the bacterial peptidoglycan. The protein is Diaminopimelate epimerase of Afipia carboxidovorans (strain ATCC 49405 / DSM 1227 / KCTC 32145 / OM5) (Oligotropha carboxidovorans).